Reading from the N-terminus, the 359-residue chain is Type-1 angiotensin II receptor (359 aa).

Over 1–25 (MILNSSTEDGIKRIQDDCPKAGRHN) the chain is Extracellular. N-linked (GlcNAc...) asparagine glycosylation is present at N4. 2 residues coordinate angiotensin II: Q15 and D17. Cystine bridges form between C18/C274 and C101/C180. A helical transmembrane segment spans residues 26–55 (YIFVMIPTLYSIIFVVGIFGNSLVVIVIYF). The Cytoplasmic segment spans residues 56–61 (YMKLKT). A helical transmembrane segment spans residues 62 to 89 (VASVFLLNLALADLCFLLTLPLWAVYTA). At 90–98 (MEYRWPFGN) the chain is on the extracellular side. Residues 99 to 125 (YLCKIASASVSFNLYASVFLLTCLSID) traverse the membrane as a helical segment. Topologically, residues 126 to 141 (RYLAIVHPMKSRLRRT) are cytoplasmic. The chain crosses the membrane as a helical span at residues 142-165 (MLVAKVTCIIIWLLAGLASLPAII). At 166-190 (HRNVFFIENTNITVCAFHYESQNST) the chain is on the extracellular side. R167 contacts angiotensin II. N-linked (GlcNAc...) asparagine glycosylation occurs at N176. F182, H183, and Y184 together coordinate angiotensin II. N-linked (GlcNAc...) asparagine glycosylation occurs at N188. Residues 191 to 216 (LPIGLGLTKNILGFLFPFLIILTSYT) traverse the membrane as a helical segment. K199 serves as a coordination point for angiotensin II. The Cytoplasmic portion of the chain corresponds to 217–239 (LIWKALKKAYEIQKNKPRNDDIF). Residues 240 to 268 (KIIMAIVLFFFFSWIPHQIFTFLDVLIQL) form a helical membrane-spanning segment. Residues 269-278 (GIIRDCRIAD) lie on the Extracellular side of the membrane. The helical transmembrane segment at 279-304 (IVDTAMPITICIAYFNNCLNPLFYGF) threads the bilayer. Residues 305–359 (LGKKFKKYFLQLLKYIPPKAKSHSNLSTKMSTLSYRPSDNVSSSTKKPAPCFEVE) lie on the Cytoplasmic side of the membrane. Polar residues predominate over residues 335–350 (STLSYRPSDNVSSSTK). Positions 335–359 (STLSYRPSDNVSSSTKKPAPCFEVE) are disordered. A lipid anchor (S-palmitoyl cysteine) is attached at C355.

It belongs to the G-protein coupled receptor 1 family. Interacts with MAS1. Interacts with ARRB1. Interacts with FLNA (via filamin repeat 21); increases PKA-mediated phosphorylation of FLNA. Post-translationally, C-terminal Ser or Thr residues may be phosphorylated.

Its subcellular location is the cell membrane. Its function is as follows. Receptor for angiotensin II, a vasoconstricting peptide, which acts as a key regulator of blood pressure and sodium retention by the kidney. The activated receptor in turn couples to G-alpha proteins G(q) (GNAQ, GNA11, GNA14 or GNA15) and thus activates phospholipase C and increases the cytosolic Ca(2+) concentrations, which in turn triggers cellular responses such as stimulation of protein kinase C. This is Type-1 angiotensin II receptor (AGTR1) from Pan troglodytes (Chimpanzee).